The sequence spans 131 residues: Small ribosomal subunit protein uS8 (131 aa).

The protein belongs to the universal ribosomal protein uS8 family. Part of the 30S ribosomal subunit. Contacts proteins S5 and S12.

Functionally, one of the primary rRNA binding proteins, it binds directly to 16S rRNA central domain where it helps coordinate assembly of the platform of the 30S subunit. This chain is Small ribosomal subunit protein uS8, found in Rhizorhabdus wittichii (strain DSM 6014 / CCUG 31198 / JCM 15750 / NBRC 105917 / EY 4224 / RW1) (Sphingomonas wittichii).